The primary structure comprises 103 residues: Large ribosomal subunit protein bL21 (103 aa).

This sequence belongs to the bacterial ribosomal protein bL21 family. Part of the 50S ribosomal subunit. Contacts protein L20.

In terms of biological role, this protein binds to 23S rRNA in the presence of protein L20. The protein is Large ribosomal subunit protein bL21 of Verminephrobacter eiseniae (strain EF01-2).